The chain runs to 223 residues: UPF0641 membrane protein PJ4664.05 (223 aa).

5 helical membrane passes run 10–30 (FNSF…FNWI), 49–69 (LTVL…FSDI), 81–101 (ILLY…WSIV), 146–166 (LSIG…MLWV), and 190–210 (TIFY…LKMV).

This sequence belongs to the UPF0641 family.

It is found in the endoplasmic reticulum membrane. This is UPF0641 membrane protein PJ4664.05 from Schizosaccharomyces pombe (strain 972 / ATCC 24843) (Fission yeast).